Consider the following 505-residue polypeptide: ATP synthase subunit alpha, chloroplastic (505 aa).

170–177 (GDRQTGKT) is a binding site for ATP.

The protein belongs to the ATPase alpha/beta chains family. As to quaternary structure, F-type ATPases have 2 components, CF(1) - the catalytic core - and CF(0) - the membrane proton channel. CF(1) has five subunits: alpha(3), beta(3), gamma(1), delta(1), epsilon(1). CF(0) has four main subunits: a, b, b' and c.

The protein localises to the plastid. It localises to the chloroplast thylakoid membrane. It carries out the reaction ATP + H2O + 4 H(+)(in) = ADP + phosphate + 5 H(+)(out). In terms of biological role, produces ATP from ADP in the presence of a proton gradient across the membrane. The alpha chain is a regulatory subunit. This chain is ATP synthase subunit alpha, chloroplastic, found in Oenothera elata subsp. hookeri (Hooker's evening primrose).